The following is an 80-amino-acid chain: Antitoxin VapB15 (80 aa).

The segment at 60-80 is disordered; sequence DFSNDEIESFSDTDRKLADES. Glu-67 is a binding site for Mg(2+). Residue Glu-67 participates in Mn(2+) binding. Basic and acidic residues predominate over residues 71–80; that stretch reads DTDRKLADES.

In terms of assembly, forms a VapB15-VapC15(2) heterotrimer and a VapB15(2)-VapC15(2) heterotetramer; each toxin pair forms a homodimer which creates a channel in which the antitoxin binds. It depends on Mg(2+) as a cofactor. Mn(2+) serves as cofactor.

In terms of biological role, antitoxin component of a type II toxin-antitoxin (TA) system. Neutralizes the toxic effect of cognate toxin VapC15. The chain is Antitoxin VapB15 (vapB15) from Mycobacterium tuberculosis (strain CDC 1551 / Oshkosh).